A 534-amino-acid polypeptide reads, in one-letter code: 26S proteasome non-ATPase regulatory subunit 3 (534 aa).

Over residues 1 to 16 (MKQEGSARRRGADKAK) the composition is skewed to basic and acidic residues. The interval 1–68 (MKQEGSARRR…AAEHSQRELD (68 aa)) is disordered. Over residues 17 to 32 (PPPGGGEQEPPPPPAP) the composition is skewed to pro residues. A Glycyl lysine isopeptide (Lys-Gly) (interchain with G-Cter in SUMO1); alternate cross-link involves residue Lys38. Lys38 participates in a covalent cross-link: Glycyl lysine isopeptide (Lys-Gly) (interchain with G-Cter in SUMO2); alternate. Residues 49–61 (GETAGKTAAAAAE) show a composition bias toward low complexity. One can recognise a PCI domain in the interval 286-465 (ARYLYYTGRI…GYVQSKEMID (180 aa)). Phosphoserine is present on residues Ser418 and Ser430. Residues 500 to 534 (SYNKDLESAEERREREQQDLEFAKEMAEDDDDSFP) form a disordered region. The segment covering 501–525 (YNKDLESAEERREREQQDLEFAKEM) has biased composition (basic and acidic residues).

Belongs to the proteasome subunit S3 family. As to quaternary structure, component of the 19S proteasome regulatory particle complex. The 26S proteasome consists of a 20S core particle (CP) and two 19S regulatory subunits (RP). The regulatory particle is made of a lid composed of 9 subunits including PSMD3, a base containing 6 ATPases and few additional components. Interacts with UBQLN1 (via ubiquitin-like domain). Interacts with ERCC6.

Functionally, component of the 26S proteasome, a multiprotein complex involved in the ATP-dependent degradation of ubiquitinated proteins. This complex plays a key role in the maintenance of protein homeostasis by removing misfolded or damaged proteins, which could impair cellular functions, and by removing proteins whose functions are no longer required. Therefore, the proteasome participates in numerous cellular processes, including cell cycle progression, apoptosis, or DNA damage repair. The polypeptide is 26S proteasome non-ATPase regulatory subunit 3 (PSMD3) (Bos taurus (Bovine)).